The following is a 547-amino-acid chain: Chaperonin GroEL (547 aa).

ATP-binding positions include 29-32, K50, 86-90, G414, and D495; these read TLGP and DGTTT. A disordered region spans residues 525-547; the sequence is PSDKEDSIPPMRGGMGGMGGMDF. Gly residues predominate over residues 537–547; that stretch reads GGMGGMGGMDF.

This sequence belongs to the chaperonin (HSP60) family. Forms a cylinder of 14 subunits composed of two heptameric rings stacked back-to-back. Interacts with the co-chaperonin GroES.

Its subcellular location is the cytoplasm. The enzyme catalyses ATP + H2O + a folded polypeptide = ADP + phosphate + an unfolded polypeptide.. In terms of biological role, together with its co-chaperonin GroES, plays an essential role in assisting protein folding. The GroEL-GroES system forms a nano-cage that allows encapsulation of the non-native substrate proteins and provides a physical environment optimized to promote and accelerate protein folding. This is Chaperonin GroEL from Rickettsia felis (strain ATCC VR-1525 / URRWXCal2) (Rickettsia azadi).